Reading from the N-terminus, the 705-residue chain is Elongation factor G 2 (705 aa).

Positions 8–288 (ERYRNIGISA…AVIDYLPSPA (281 aa)) constitute a tr-type G domain. GTP contacts are provided by residues 17 to 24 (AHIDAGKT), 86 to 90 (DTPGH), and 140 to 143 (NKMD).

This sequence belongs to the TRAFAC class translation factor GTPase superfamily. Classic translation factor GTPase family. EF-G/EF-2 subfamily.

The protein localises to the cytoplasm. In terms of biological role, catalyzes the GTP-dependent ribosomal translocation step during translation elongation. During this step, the ribosome changes from the pre-translocational (PRE) to the post-translocational (POST) state as the newly formed A-site-bound peptidyl-tRNA and P-site-bound deacylated tRNA move to the P and E sites, respectively. Catalyzes the coordinated movement of the two tRNA molecules, the mRNA and conformational changes in the ribosome. In Bordetella parapertussis (strain 12822 / ATCC BAA-587 / NCTC 13253), this protein is Elongation factor G 2.